The following is a 134-amino-acid chain: Small ribosomal subunit protein uS11 (134 aa).

It belongs to the universal ribosomal protein uS11 family. Part of the 30S ribosomal subunit. Interacts with proteins S7 and S18. Binds to IF-3.

Functionally, located on the platform of the 30S subunit, it bridges several disparate RNA helices of the 16S rRNA. Forms part of the Shine-Dalgarno cleft in the 70S ribosome. This chain is Small ribosomal subunit protein uS11, found in Parafrankia sp. (strain EAN1pec).